Reading from the N-terminus, the 200-residue chain is ATP-dependent Clp protease proteolytic subunit 2 (200 aa).

Residue serine 101 is the Nucleophile of the active site. The active site involves histidine 126.

This sequence belongs to the peptidase S14 family. In terms of assembly, fourteen ClpP subunits assemble into 2 heptameric rings which stack back to back to give a disk-like structure with a central cavity, resembling the structure of eukaryotic proteasomes.

It localises to the cytoplasm. It catalyses the reaction Hydrolysis of proteins to small peptides in the presence of ATP and magnesium. alpha-casein is the usual test substrate. In the absence of ATP, only oligopeptides shorter than five residues are hydrolyzed (such as succinyl-Leu-Tyr-|-NHMec, and Leu-Tyr-Leu-|-Tyr-Trp, in which cleavage of the -Tyr-|-Leu- and -Tyr-|-Trp bonds also occurs).. Its function is as follows. Cleaves peptides in various proteins in a process that requires ATP hydrolysis. Has a chymotrypsin-like activity. Plays a major role in the degradation of misfolded proteins. The sequence is that of ATP-dependent Clp protease proteolytic subunit 2 from Prochlorococcus marinus (strain MIT 9313).